Here is a 265-residue protein sequence, read N- to C-terminus: ClpXP adapter protein SpxH (265 aa).

The protein belongs to the SpxH family. As to quaternary structure, interacts with Spx.

Its subcellular location is the cytoplasm. Functionally, adapter protein required for efficient degradation of Spx by ClpXP under non-stress conditions. Interaction with Spx stabilizes Spx and exposes the C-terminus of Spx for recognition and proteolysis by ClpXP. In Staphylococcus haemolyticus (strain JCSC1435), this protein is ClpXP adapter protein SpxH.